Reading from the N-terminus, the 155-residue chain is Small ribosomal subunit protein uS17 (155 aa).

A2 carries the post-translational modification N-acetylalanine.

It belongs to the universal ribosomal protein uS17 family.

In Drosophila pseudoobscura pseudoobscura (Fruit fly), this protein is Small ribosomal subunit protein uS17.